Here is a 363-residue protein sequence, read N- to C-terminus: Type-2 angiotensin II receptor (363 aa).

The Extracellular portion of the chain corresponds to 1 to 45 (MKGNSTLATTSKNITSGLHFGLVNISGNNESTLNCSQKPSDKHLD). N-linked (GlcNAc...) asparagine glycosylation is found at asparagine 4, asparagine 13, asparagine 24, asparagine 29, and asparagine 34. Disulfide bonds link cysteine 35–cysteine 290 and cysteine 117–cysteine 195. The chain crosses the membrane as a helical span at residues 46-70 (AIPILYYIIFVIGFLVNIVVVTLFC). Residues 71–80 (CQKGPKKVSS) lie on the Cytoplasmic side of the membrane. The helical transmembrane segment at 81-104 (IYIFNLAVADLLLLATLPLWATYY) threads the bilayer. 2 residues coordinate angiotensin II: tyrosine 103 and tyrosine 104. The Extracellular segment spans residues 105–114 (SYRYDWLFGP). The helical transmembrane segment at 115-140 (VMCKVFGSFLTLNMFASIFFITCMSV) threads the bilayer. The Cytoplasmic portion of the chain corresponds to 141-159 (DRYQSVIYPFLSQRRNPWQ). Residues 160-181 (ASYIVPLVWCMACLSSLPTFYF) form a helical membrane-spanning segment. Residues arginine 182, tyrosine 204, and lysine 215 each coordinate angiotensin II. Residues 182-206 (RDVRTIEYLGVNACIMAFPPEKYAQ) are Extracellular-facing. A helical transmembrane segment spans residues 207-232 (WSAGIALMKNILGFIIPLIFIATCYF). The Cytoplasmic segment spans residues 233 to 257 (GIRKHLLKTNSYGKNRITRDQVLKM). A helical membrane pass occupies residues 258–281 (AAAVVLAFIICWLPFHVLTFLDAL). Aspartate 279 is an angiotensin II binding site. At 282 to 294 (AWMGVINSCEVIA) the chain is on the extracellular side. The chain crosses the membrane as a helical span at residues 295–320 (VIDLALPFAILLGFTNSCVNPFLYCF). Residue aspartate 297 coordinates angiotensin II. The Cytoplasmic segment spans residues 321–363 (VGNRFQQKLRSVFRVPITWLQGKRESMSCRKSSSLREMETFVS). Residues 324–333 (RFQQKLRSVF) are helix VIII.

The protein belongs to the G-protein coupled receptor 1 family. In terms of assembly, interacts with MTUS1. In terms of tissue distribution, in adult, highly expressed in myometrium with lower levels in adrenal gland and fallopian tube. Expressed in the cerebellum. Very highly expressed in fetal kidney and intestine.

It localises to the cell membrane. In terms of biological role, receptor for angiotensin II, a vasoconstricting peptide. Signals primarily via a non-canonical G-protein- and beta-arrestin independent pathways. Cooperates with MTUS1 to inhibit ERK2 activation and cell proliferation. This Homo sapiens (Human) protein is Type-2 angiotensin II receptor.